The following is a 1062-amino-acid chain: Carbamoyl phosphate synthase large chain (1062 aa).

Residues 1-401 (MPKRKDIHKI…AMQKAVRSLE (401 aa)) form a carboxyphosphate synthetic domain region. Residues arginine 129, arginine 169, glycine 175, glycine 176, lysine 208, isoleucine 210, glutamate 215, glycine 241, isoleucine 242, histidine 243, glutamine 284, and glutamate 298 each contribute to the ATP site. The 195-residue stretch at 133 to 327 (KNLCKELGEP…IAKMAAKIAV (195 aa)) folds into the ATP-grasp 1 domain. Mg(2+) contacts are provided by glutamine 284, glutamate 298, and asparagine 300. Mn(2+)-binding residues include glutamine 284, glutamate 298, and asparagine 300. Positions 402-546 (IDEKDLYSEE…YSTYDAENES (145 aa)) are oligomerization domain. The segment at 547–929 (HRSGKKSVIV…ALYKAFAGAK (383 aa)) is carbamoyl phosphate synthetic domain. Positions 671–861 (DDIIKELKLN…MAQVATRVIM (191 aa)) constitute an ATP-grasp 2 domain. ATP contacts are provided by arginine 707, aspartate 746, leucine 748, glutamate 752, glycine 777, valine 778, histidine 779, serine 780, glutamine 820, and glutamate 832. Mg(2+) contacts are provided by glutamine 820, glutamate 832, and asparagine 834. Positions 820, 832, and 834 each coordinate Mn(2+). In terms of domain architecture, MGS-like spans 930–1062 (MQLPENGNVL…NRSFATDALQ (133 aa)). The segment at 930-1062 (MQLPENGNVL…NRSFATDALQ (133 aa)) is allosteric domain.

Belongs to the CarB family. In terms of assembly, composed of two chains; the small (or glutamine) chain promotes the hydrolysis of glutamine to ammonia, which is used by the large (or ammonia) chain to synthesize carbamoyl phosphate. Tetramer of heterodimers (alpha,beta)4. The cofactor is Mg(2+). It depends on Mn(2+) as a cofactor.

It catalyses the reaction hydrogencarbonate + L-glutamine + 2 ATP + H2O = carbamoyl phosphate + L-glutamate + 2 ADP + phosphate + 2 H(+). The catalysed reaction is hydrogencarbonate + NH4(+) + 2 ATP = carbamoyl phosphate + 2 ADP + phosphate + 2 H(+). It participates in amino-acid biosynthesis; L-arginine biosynthesis; carbamoyl phosphate from bicarbonate: step 1/1. The protein operates within pyrimidine metabolism; UMP biosynthesis via de novo pathway; (S)-dihydroorotate from bicarbonate: step 1/3. In terms of biological role, large subunit of the glutamine-dependent carbamoyl phosphate synthetase (CPSase). CPSase catalyzes the formation of carbamoyl phosphate from the ammonia moiety of glutamine, carbonate, and phosphate donated by ATP, constituting the first step of 2 biosynthetic pathways, one leading to arginine and/or urea and the other to pyrimidine nucleotides. The large subunit (synthetase) binds the substrates ammonia (free or transferred from glutamine from the small subunit), hydrogencarbonate and ATP and carries out an ATP-coupled ligase reaction, activating hydrogencarbonate by forming carboxy phosphate which reacts with ammonia to form carbamoyl phosphate. The polypeptide is Carbamoyl phosphate synthase large chain (Lactobacillus acidophilus (strain ATCC 700396 / NCK56 / N2 / NCFM)).